A 291-amino-acid polypeptide reads, in one-letter code: MEKLAASTEPQGPRPVLGRESVQVPDDQDFRSFRSECEAEVGWNLTYSRAGVSVWVQAVEMDRTLHKIKCRMECCDVPAETLYDVLHDIEYRKKWDSNVIETFDIARLTVNADVGYYSWRCPKPLKNRDVITLRSWLPMGADYIIMNYSVKHPKYPPRKDLVRAVSIQTGYLIQSTGPKSCVITYLAQVDPKGSLPKWVVNKSSQFLAPKAMKKMYKACLKYPEWKQKHLPHFKPWLHPEQSPLPSLALSELSVQHADSLENIDESAVAESREERMGGAGGEGSDDDTSLT.

The residue at position 1 (Met1) is an N-acetylmethionine. Residues 1–20 form a disordered region; sequence MEKLAASTEPQGPRPVLGRE. The START domain occupies 14–224; that stretch reads RPVLGRESVQ…MYKACLKYPE (211 aa). Residues Lys94, Lys197, and Lys202 each carry the N6-succinyllysine modification. Phosphoserine occurs at positions 253 and 259. A disordered region spans residues 260–291; that stretch reads LENIDESAVAESREERMGGAGGEGSDDDTSLT. Ser284 is subject to Phosphoserine; by CK2. Phosphoserine is present on Ser289.

In terms of processing, phosphorylation at Ser-284 by CK2 negatively regulates lipid transfer activity, possibly by decreasing membrane association.

The protein localises to the cell projection. The protein resides in the cilium. Its subcellular location is the flagellum. It localises to the cytoplasm. It is found in the membrane. Its function is as follows. May play metabolic roles in sperm maturation or fertilization. Phospholipid transfer protein that preferentially selects lipid species containing a palmitoyl or stearoyl chain on the sn-1 and an unsaturated fatty acyl chain (18:1 or 18:2) on the sn-2 position. Able to transfer phosphatidylcholine (PC) and phosphatidyetanolamline (PE) between membranes. The chain is START domain-containing protein 10 (STARD10) from Homo sapiens (Human).